A 525-amino-acid chain; its full sequence is Glucose-6-phosphate isomerase (525 aa).

Glutamate 347 serves as the catalytic Proton donor. Catalysis depends on residues histidine 378 and lysine 493.

Belongs to the GPI family.

Its subcellular location is the cytoplasm. It catalyses the reaction alpha-D-glucose 6-phosphate = beta-D-fructose 6-phosphate. Its pathway is carbohydrate biosynthesis; gluconeogenesis. It functions in the pathway carbohydrate degradation; glycolysis; D-glyceraldehyde 3-phosphate and glycerone phosphate from D-glucose: step 2/4. Its function is as follows. Catalyzes the reversible isomerization of glucose-6-phosphate to fructose-6-phosphate. The protein is Glucose-6-phosphate isomerase of Chlamydia trachomatis serovar D (strain ATCC VR-885 / DSM 19411 / UW-3/Cx).